A 511-amino-acid chain; its full sequence is Glucan endo-1,3-beta-glucosidase 1 (511 aa).

A signal peptide spans 1–28 (MAFTSMVSTVPVLFFFFTLLLISANSSS). The N-linked (GlcNAc...) asparagine glycan is linked to Asn109. The active-site Proton donor is the Glu137. 2 N-linked (GlcNAc...) asparagine glycosylation sites follow: Asn192 and Asn274. Glu284 acts as the Nucleophile in catalysis. 5 N-linked (GlcNAc...) asparagine glycosylation sites follow: Asn374, Asn378, Asn407, Asn473, and Asn480. Cys382 and Cys445 are oxidised to a cystine. Ala485 is lipidated: GPI-anchor amidated alanine. The propeptide at 486-511 (AGEATSRSLSRGFCVTIMILVTFSIL) is removed in mature form.

This sequence belongs to the glycosyl hydrolase 17 family. In terms of processing, contains two additional disulfide bonds.

It localises to the cell membrane. It catalyses the reaction Hydrolysis of (1-&gt;3)-beta-D-glucosidic linkages in (1-&gt;3)-beta-D-glucans.. This is Glucan endo-1,3-beta-glucosidase 1 from Arabidopsis thaliana (Mouse-ear cress).